A 151-amino-acid chain; its full sequence is Transcription antitermination protein NusB (151 aa).

It belongs to the NusB family.

Involved in transcription antitermination. Required for transcription of ribosomal RNA (rRNA) genes. Binds specifically to the boxA antiterminator sequence of the ribosomal RNA (rrn) operons. The sequence is that of Transcription antitermination protein NusB from Hamiltonella defensa subsp. Acyrthosiphon pisum (strain 5AT).